A 358-amino-acid chain; its full sequence is F-box protein At4g35733 (358 aa).

The 48-residue stretch at 4–51 folds into the F-box domain; it reads ATVWSDLPGELLDHIANGLFSKVELLRFRSICKTFRSAVDSDKNFLDH.

In terms of assembly, part of a SCF (ASK-cullin-F-box) protein ligase complex.

It functions in the pathway protein modification; protein ubiquitination. Functionally, component of SCF(ASK-cullin-F-box) E3 ubiquitin ligase complexes, which may mediate the ubiquitination and subsequent proteasomal degradation of target proteins. This is F-box protein At4g35733 from Arabidopsis thaliana (Mouse-ear cress).